The chain runs to 418 residues: LL-diaminopimelate aminotransferase (418 aa).

Substrate is bound by residues Tyr25 and Gly52. Pyridoxal 5'-phosphate-binding positions include Tyr78, 115-116 (SK), Tyr140, Asn190, Tyr221, and 248-250 (SFS). Residues Lys116, Tyr140, and Asn190 each coordinate substrate. Position 251 is an N6-(pyridoxal phosphate)lysine (Lys251). Arg259 provides a ligand contact to pyridoxal 5'-phosphate.

Belongs to the class-I pyridoxal-phosphate-dependent aminotransferase family. As to quaternary structure, homodimer. Requires pyridoxal 5'-phosphate as cofactor.

It is found in the cytoplasm. It catalyses the reaction (2S,6S)-2,6-diaminopimelate + 2-oxoglutarate = (S)-2,3,4,5-tetrahydrodipicolinate + L-glutamate + H2O + H(+). Its pathway is amino-acid biosynthesis; L-lysine biosynthesis via DAP pathway; LL-2,6-diaminopimelate from (S)-tetrahydrodipicolinate (aminotransferase route): step 1/1. Functionally, involved in the synthesis of meso-diaminopimelate (m-DAP or DL-DAP), required for both lysine and peptidoglycan biosynthesis. Catalyzes the direct conversion of tetrahydrodipicolinate to LL-diaminopimelate, a reaction that requires three enzymes in E.coli. This chain is LL-diaminopimelate aminotransferase (dapL), found in Methanocaldococcus jannaschii (strain ATCC 43067 / DSM 2661 / JAL-1 / JCM 10045 / NBRC 100440) (Methanococcus jannaschii).